We begin with the raw amino-acid sequence, 260 residues long: HTH-type transcriptional repressor NanR (260 aa).

Residues M1–R22 form a disordered region. Positions K27–P95 constitute an HTH gntR-type domain. A DNA-binding region (H-T-H motif) is located at residues E55 to A74.

It belongs to the NanR family.

Transcriptional repressor that controls expression of the genes required for the catabolism of sialic acids. The chain is HTH-type transcriptional repressor NanR from Salmonella newport (strain SL254).